We begin with the raw amino-acid sequence, 445 residues long: Phosphoglucosamine mutase (445 aa).

The active-site Phosphoserine intermediate is the Ser-102. Residues Ser-102, Asp-240, Asp-242, and Asp-244 each contribute to the Mg(2+) site. Residue Ser-102 is modified to Phosphoserine.

The protein belongs to the phosphohexose mutase family. It depends on Mg(2+) as a cofactor. Activated by phosphorylation.

The enzyme catalyses alpha-D-glucosamine 1-phosphate = D-glucosamine 6-phosphate. In terms of biological role, catalyzes the conversion of glucosamine-6-phosphate to glucosamine-1-phosphate. The polypeptide is Phosphoglucosamine mutase (Mycobacterium ulcerans (strain Agy99)).